Here is a 358-residue protein sequence, read N- to C-terminus: Trace amine-associated receptor 7d (358 aa).

The Extracellular portion of the chain corresponds to 1 to 47; sequence MRVDDDRFPWDQDSILSRDLLSASSLQLCYENLNRSCVRSPYSPGPR. N34 carries N-linked (GlcNAc...) asparagine glycosylation. 2 disulfides stabilise this stretch: C37–C201 and C120–C205. Residues 48-68 form a helical membrane-spanning segment; sequence LILYAVFGFGAVLAVCGNLMV. Residues 69–83 lie on the Cytoplasmic side of the membrane; that stretch reads MTSILHFRQLHSPAN. The helical transmembrane segment at 84 to 104 threads the bilayer; the sequence is FLVASLACADFLVGLTVMPFS. The Extracellular segment spans residues 105–122; the sequence is MVRSVEGCWYFGDTYCKL. The chain crosses the membrane as a helical span at residues 123-143; that stretch reads HTCFDVSFCYCSLFHLCFISV. At 144-166 the chain is on the cytoplasmic side; that stretch reads DRYIAVSDPLIYPTRFTASVSGK. Residues 167–187 form a helical membrane-spanning segment; the sequence is CITFSWLLSIIYGFPLIYTGA. The Extracellular segment spans residues 188–212; it reads SEAGLEDLVSALTCVGGCQIPMNQK. Residues 213–233 form a helical membrane-spanning segment; it reads FVLINFLLFLVPTLVMMTVYS. The Cytoplasmic segment spans residues 234-274; sequence KIFLIARQQAQNIEKMRKQTARASESYKDRVCKRERKAAKT. Residues 275-295 form a helical membrane-spanning segment; the sequence is LGIAVAAFLLSWLPYFIDSII. At 296-309 the chain is on the extracellular side; it reads DAFLGFITPTYVYE. Residues 310–333 traverse the membrane as a helical segment; it reads ILIWIVYYNSSMNPLIYAFFYPWF. The Cytoplasmic segment spans residues 334 to 358; it reads RKATKLIVTGKILRENSSTINLFPE.

Belongs to the G-protein coupled receptor 1 family.

The protein localises to the cell membrane. Olfactory receptor specific for N,N-dimethylalkylamines trace amines, such as N,N-dimethylcyclohexylamine. Trace amine compounds are enriched in animal body fluids and act on trace amine-associated receptors (TAARs) to elicit both intraspecific and interspecific innate behaviors. Ligand-binding causes a conformation change that triggers signaling via G(s)-class of G alpha proteins (GNAL or GNAS). This Rattus norvegicus (Rat) protein is Trace amine-associated receptor 7d.